Consider the following 445-residue polypeptide: Chromosomal replication initiator protein DnaA (445 aa).

The domain I, interacts with DnaA modulators stretch occupies residues Met-1–Glu-72. A domain II region spans residues Glu-72–Asn-107. The interval Gln-108–Ser-324 is domain III, AAA+ region. ATP-binding residues include Gly-152, Gly-154, Lys-155, and Thr-156. The interval Lys-325–Ser-445 is domain IV, binds dsDNA.

The protein belongs to the DnaA family. Oligomerizes as a right-handed, spiral filament on DNA at oriC.

The protein resides in the cytoplasm. Plays an essential role in the initiation and regulation of chromosomal replication. ATP-DnaA binds to the origin of replication (oriC) to initiate formation of the DNA replication initiation complex once per cell cycle. Binds the DnaA box (a 9 base pair repeat at the origin) and separates the double-stranded (ds)DNA. Forms a right-handed helical filament on oriC DNA; dsDNA binds to the exterior of the filament while single-stranded (ss)DNA is stabiized in the filament's interior. The ATP-DnaA-oriC complex binds and stabilizes one strand of the AT-rich DNA unwinding element (DUE), permitting loading of DNA polymerase. After initiation quickly degrades to an ADP-DnaA complex that is not apt for DNA replication. Binds acidic phospholipids. This is Chromosomal replication initiator protein DnaA from Macrococcus caseolyticus (strain JCSC5402) (Macrococcoides caseolyticum).